We begin with the raw amino-acid sequence, 72 residues long: Translation initiation factor IF-1 (72 aa).

Residues 1–72 form the S1-like domain; sequence MSDKSIKMQA…SNGRITYRHK (72 aa).

It belongs to the IF-1 family. In terms of assembly, component of the 30S ribosomal translation pre-initiation complex which assembles on the 30S ribosome in the order IF-2 and IF-3, IF-1 and N-formylmethionyl-tRNA(fMet); mRNA recruitment can occur at any time during PIC assembly.

It is found in the cytoplasm. One of the essential components for the initiation of protein synthesis. Stabilizes the binding of IF-2 and IF-3 on the 30S subunit to which N-formylmethionyl-tRNA(fMet) subsequently binds. Helps modulate mRNA selection, yielding the 30S pre-initiation complex (PIC). Upon addition of the 50S ribosomal subunit IF-1, IF-2 and IF-3 are released leaving the mature 70S translation initiation complex. The polypeptide is Translation initiation factor IF-1 (Mycoplasmopsis pulmonis (strain UAB CTIP) (Mycoplasma pulmonis)).